Reading from the N-terminus, the 240-residue chain is Thyroid transcription factor 1-associated protein 26 (240 aa).

The tract at residues 104 to 181 (LRKQQRKAGL…QEEYERVQAK (78 aa)) is disordered. Residues 131-149 (TEQTSSEEPPGGHQPQPEE) show a composition bias toward low complexity. The segment covering 171–181 (AQEEYERVQAK) has biased composition (basic and acidic residues).

This sequence belongs to the TAP26 family. In terms of assembly, interacts with NKX2-1.

Its subcellular location is the nucleus. Its function is as follows. Component of the transcription complexes of the pulmonary surfactant-associated protein-B (SFTPB) and -C (SFTPC). Enhances homeobox protein Nkx-2.1-activated SFTPB and SFTPC promoter activities. The sequence is that of Thyroid transcription factor 1-associated protein 26 (Ccdc59) from Mus musculus (Mouse).